The primary structure comprises 559 residues: Dihydroxy-acid dehydratase (559 aa).

Mg(2+) is bound at residue Asp80. Position 121 (Cys121) interacts with [2Fe-2S] cluster. Asp122 and Lys123 together coordinate Mg(2+). Lys123 is modified (N6-carboxylysine). Cys194 serves as a coordination point for [2Fe-2S] cluster. Glu447 is a binding site for Mg(2+). Ser473 (proton acceptor) is an active-site residue.

The protein belongs to the IlvD/Edd family. Homodimer. [2Fe-2S] cluster serves as cofactor. Requires Mg(2+) as cofactor.

The enzyme catalyses (2R)-2,3-dihydroxy-3-methylbutanoate = 3-methyl-2-oxobutanoate + H2O. The catalysed reaction is (2R,3R)-2,3-dihydroxy-3-methylpentanoate = (S)-3-methyl-2-oxopentanoate + H2O. The protein operates within amino-acid biosynthesis; L-isoleucine biosynthesis; L-isoleucine from 2-oxobutanoate: step 3/4. It participates in amino-acid biosynthesis; L-valine biosynthesis; L-valine from pyruvate: step 3/4. In terms of biological role, functions in the biosynthesis of branched-chain amino acids. Catalyzes the dehydration of (2R,3R)-2,3-dihydroxy-3-methylpentanoate (2,3-dihydroxy-3-methylvalerate) into 2-oxo-3-methylpentanoate (2-oxo-3-methylvalerate) and of (2R)-2,3-dihydroxy-3-methylbutanoate (2,3-dihydroxyisovalerate) into 2-oxo-3-methylbutanoate (2-oxoisovalerate), the penultimate precursor to L-isoleucine and L-valine, respectively. This Chlorobium chlorochromatii (strain CaD3) protein is Dihydroxy-acid dehydratase.